Reading from the N-terminus, the 392-residue chain is Sterol methyltransferase-like 3 (392 aa).

The chain crosses the membrane as a helical span at residues 20-42 (VTPWQAAAGVTAAIFIGSYLWHS).

The protein belongs to the class I-like SAM-binding methyltransferase superfamily. Erg6/SMT family.

Its subcellular location is the microsome membrane. In terms of biological role, unable to convert squalene, botryococcene, cycloartenol, zymosterol or lanosterol to mono-, di-, tri- or tetramethylated derivatives. This is Sterol methyltransferase-like 3 (SMT-3) from Botryococcus braunii (Green alga).